We begin with the raw amino-acid sequence, 230 residues long: ATP synthase subunit a 1 (230 aa).

5 consecutive transmembrane segments (helical) span residues 20–40 (ATIVFSWLVMLILVLGSWLIT), 78–98 (FLPFIGTLFLFITMANLLTIF), 112–132 (AALALCVFVAVPIYGIKNVGI), 174–194 (LLVAILISIVPLFFPAVMTLF), and 195–215 (GLLVGVIQAYVFTILAMVYIA).

Belongs to the ATPase A chain family. F-type ATPases have 2 components, CF(1) - the catalytic core - and CF(0) - the membrane proton channel. CF(1) has five subunits: alpha(3), beta(3), gamma(1), delta(1), epsilon(1). CF(0) has four main subunits: a, b, b' and c.

Its subcellular location is the cellular thylakoid membrane. Its function is as follows. Key component of the proton channel; it plays a direct role in the translocation of protons across the membrane. The sequence is that of ATP synthase subunit a 1 from Crocosphaera subtropica (strain ATCC 51142 / BH68) (Cyanothece sp. (strain ATCC 51142)).